An 826-amino-acid polypeptide reads, in one-letter code: Protein FAM171B (826 aa).

An N-terminal signal peptide occupies residues 1-32 (MARLCRRVPCTLLLGLAVVLLKARLVPAAARA). At 33-353 (ELSRSDLSLI…DSKDITAYHT (321 aa)) the chain is on the extracellular side. Residues 52-71 (QQQQQKQLEEAEEERTEVPG) are disordered. N-linked (GlcNAc...) asparagine glycosylation is found at asparagine 108, asparagine 113, asparagine 213, and asparagine 268. The helical transmembrane segment at 354-374 (VFLTAILGGTIVIVIGFFAVL) threads the bilayer. Residues 375–826 (LCYCRDKCGT…REERPLIPIN (452 aa)) lie on the Cytoplasmic side of the membrane. Disordered stretches follow at residues 429 to 448 (NAKN…AETE), 474 to 493 (QNNY…GSKQ), and 774 to 826 (HPGE…IPIN). Residues 438–448 (QKKEPSKAETE) show a composition bias toward basic and acidic residues. The span at 474–486 (QNNYSRNPTQSLE) shows a compositional bias: polar residues. Residues 774 to 786 (HPGEESPGRKSTV) are compositionally biased toward basic and acidic residues. A Phosphoserine modification is found at serine 794. Positions 805-826 (AKRDSKTNIWKKREERPLIPIN) are enriched in basic and acidic residues.

Belongs to the FAM171 family.

The protein localises to the cytoplasmic granule. The protein resides in the membrane. This Homo sapiens (Human) protein is Protein FAM171B (FAM171B).